A 275-amino-acid chain; its full sequence is 3-methyl-2-oxobutanoate hydroxymethyltransferase (275 aa).

2 residues coordinate Mg(2+): aspartate 44 and aspartate 83. Residues 44–45 (DS), aspartate 83, and lysine 113 contribute to the 3-methyl-2-oxobutanoate site. Residue glutamate 115 coordinates Mg(2+). The Proton acceptor role is filled by glutamate 182.

This sequence belongs to the PanB family. As to quaternary structure, homodecamer; pentamer of dimers. Mg(2+) serves as cofactor.

The protein resides in the cytoplasm. It carries out the reaction 3-methyl-2-oxobutanoate + (6R)-5,10-methylene-5,6,7,8-tetrahydrofolate + H2O = 2-dehydropantoate + (6S)-5,6,7,8-tetrahydrofolate. Its pathway is cofactor biosynthesis; (R)-pantothenate biosynthesis; (R)-pantoate from 3-methyl-2-oxobutanoate: step 1/2. Its function is as follows. Catalyzes the reversible reaction in which hydroxymethyl group from 5,10-methylenetetrahydrofolate is transferred onto alpha-ketoisovalerate to form ketopantoate. In Clostridioides difficile (strain 630) (Peptoclostridium difficile), this protein is 3-methyl-2-oxobutanoate hydroxymethyltransferase.